Here is a 429-residue protein sequence, read N- to C-terminus: Glutamate-1-semialdehyde 2,1-aminomutase 2 (429 aa).

Residue lysine 268 is modified to N6-(pyridoxal phosphate)lysine.

This sequence belongs to the class-III pyridoxal-phosphate-dependent aminotransferase family. HemL subfamily. Homodimer. Requires pyridoxal 5'-phosphate as cofactor.

It is found in the cytoplasm. The enzyme catalyses (S)-4-amino-5-oxopentanoate = 5-aminolevulinate. It participates in porphyrin-containing compound metabolism; protoporphyrin-IX biosynthesis; 5-aminolevulinate from L-glutamyl-tRNA(Glu): step 2/2. The sequence is that of Glutamate-1-semialdehyde 2,1-aminomutase 2 from Staphylococcus epidermidis (strain ATCC 35984 / DSM 28319 / BCRC 17069 / CCUG 31568 / BM 3577 / RP62A).